Consider the following 195-residue polypeptide: Cysteine/O-acetylserine efflux protein (195 aa).

Topologically, residues 1–7 are periplasmic; it reads MTPTLLS. The chain crosses the membrane as a helical span at residues 8-28; it reads AFWTYTLITAMTPGPNNILAL. At 29-46 the chain is on the cytoplasmic side; it reads SSATSHGFRQSTRVLAGM. Residues 47 to 67 form a helical membrane-spanning segment; it reads SLGFLIVMLLCAGISFSLAVI. Over 68 to 69 the chain is Periplasmic; that stretch reads DP. A helical membrane pass occupies residues 70 to 90; it reads AAVHLLSWAGAAYIVWLAWKI. Over 91-104 the chain is Cytoplasmic; sequence ATSPTKEDGLQTKP. A helical membrane pass occupies residues 105 to 125; the sequence is ISFWASFALQFVNVKIILYGV. The Periplasmic portion of the chain corresponds to 126–141; the sequence is TALSTFVLPQTQALSW. Residues 142–162 form a helical membrane-spanning segment; sequence VVGVSVLLAMIGTFGNVCWAL. The Cytoplasmic segment spans residues 163–176; the sequence is AGHLFQRLFRQYGR. A helical transmembrane segment spans residues 177–194; it reads QLNIVLALLLVYCAVRIF. Residue tyrosine 195 is a topological domain, periplasmic.

This sequence belongs to the Rht family.

Its subcellular location is the cell inner membrane. The enzyme catalyses O-acetyl-L-serine(in) = O-acetyl-L-serine(out). It carries out the reaction L-cysteine(in) = L-cysteine(out). Functionally, exporter of O-acetylserine (OAS) and cysteine. In Escherichia coli O1:K1 / APEC, this protein is Cysteine/O-acetylserine efflux protein (eamB).